A 945-amino-acid chain; its full sequence is Argonaute protein wago-1 (945 aa).

A compositionally biased stretch (pro residues) spans 1 to 20; sequence MSPHPPQPHPPMPPMPPVTA. The disordered stretch occupies residues 1 to 41; that stretch reads MSPHPPQPHPPMPPMPPVTAPPGAMTPMPPVPADAQKLHQS. In terms of domain architecture, PAZ spans 322 to 432; it reads TVIQKLFDIT…FPAELMTVSR (111 aa). In terms of domain architecture, Piwi spans 636 to 899; that stretch reads VKDGKRLTLE…PLYVANEYAK (264 aa).

It belongs to the Argonaute family. WAGO subfamily. In terms of assembly, interacts with rde-12. Interacts with znfx-1. In terms of tissue distribution, enriched in sperm and oocytes.

It is found in the cytoplasmic granule. Functionally, argonaute protein which is involved in the endogenous small interfering RNA (endo-siRNA) pathway. Interacts with secondary 22G-RNAs, which are RNA-dependent RNA polymerase-derived endo-siRNAs, typically 22 nucleotides in length with a 5'guanosine residue. In the germline, functions in a genome surveillance system to silence transposons and aberrant transcripts. This Caenorhabditis elegans protein is Argonaute protein wago-1.